The primary structure comprises 251 residues: tRNA (guanine-N(7)-)-methyltransferase (251 aa).

Residues Glu-80, Glu-105, Asp-132, and Asp-155 each coordinate S-adenosyl-L-methionine. Residue Asp-155 is part of the active site. Residues Lys-159, Asp-191, and Thr-228–Glu-231 each bind substrate.

It belongs to the class I-like SAM-binding methyltransferase superfamily. TrmB family.

The catalysed reaction is guanosine(46) in tRNA + S-adenosyl-L-methionine = N(7)-methylguanosine(46) in tRNA + S-adenosyl-L-homocysteine. It functions in the pathway tRNA modification; N(7)-methylguanine-tRNA biosynthesis. Its function is as follows. Catalyzes the formation of N(7)-methylguanine at position 46 (m7G46) in tRNA. In Histophilus somni (strain 2336) (Haemophilus somnus), this protein is tRNA (guanine-N(7)-)-methyltransferase.